A 944-amino-acid chain; its full sequence is Protein unc-45 homolog A (944 aa).

A disordered region spans residues 1-25 (MTVSGPGTPEPRPSDPGASSAEELR). TPR repeat units follow at residues 21-54 (AEELRKEGNELFKCGDYEGALTAYTQALSLGATP), 58-91 (AILHRNRAACHLKLEDYSKAESEASKAIEKDGGD), and 92-125 (VKALYRRSQALEKLGRLDQAVLDLKRCVSLEPKN). Lys-70 is subject to N6-acetyllysine. Lys-483 is modified (N6-acetyllysine).

Interacts with PGR isoforms A and B as well as with NR3C1 in the absence of ligand, and with HSP90AB1. Binding to HSP90AB1 involves 2 UNC45A monomers per HSP90AB1 dimer.

It localises to the cytoplasm. Its subcellular location is the perinuclear region. It is found in the nucleus. Its function is as follows. May act as co-chaperone for HSP90 (Potential). Prevents the stimulation of HSP90AB1 ATPase activity by AHSA1. Positive factor in promoting PGR function in the cell. May be necessary for proper folding of myosin (Potential). Necessary for normal cell proliferation. Necessary for normal myotube formation and myosin accumulation during muscle cell development. May play a role in erythropoiesis in stroma cells in the spleen. The chain is Protein unc-45 homolog A (Unc45a) from Rattus norvegicus (Rat).